The sequence spans 797 residues: Discoidin domain-containing receptor tyrosine kinase B (797 aa).

The signal sequence occupies residues 1–19 (MKLLLYLFGVTFHSNTVVA). Residues 20–384 (LELRECSHQL…VTEHDDGTSM (365 aa)) are Extracellular-facing. Residues 25 to 181 (CSHQLGMSNR…VCMRVEVFGC (157 aa)) enclose the F5/8 type C domain. A disulfide bond links Cys25 and Cys181. Residues 46–66 (SFDLQSTGPQHARAHQESGSG) form a disordered region. N-linked (GlcNAc...) asparagine glycosylation is found at Asn141, Asn167, Asn264, and Asn353. A helical membrane pass occupies residues 385–405 (FAFIIFFFMFLIVAVIILTVL). The Cytoplasmic segment spans residues 406 to 797 (YRKREYRVKA…LVHTSPHIHF (392 aa)). A Protein kinase domain is found at 527–785 (LICVSRIGQG…PSFENVHLHL (259 aa)). ATP-binding positions include 533 to 541 (IGQGEFGEV) and Lys554. Residue Asp645 is the Proton acceptor of the active site.

Belongs to the protein kinase superfamily. Tyr protein kinase family. Insulin receptor subfamily. In terms of assembly, interacts with shc-1. In terms of processing, autophosphorylated on tyrosine residues. N-glycosylation at Asn-141 is required for axon regeneration after injury but is dispensable for kinase activity and axon localization. Expressed in some neurons in head and tail, some motoneurons in ventral nerve cord, in PVP interneurons, seam cells, rectal gland cells, vulva cells and some non-neuronal cells in the tail. Expressed in D-type motor neurons.

The protein localises to the cell membrane. It is found in the cell projection. The protein resides in the axon. It localises to the perikaryon. The enzyme catalyses L-tyrosyl-[protein] + ATP = O-phospho-L-tyrosyl-[protein] + ADP + H(+). Functionally, tyrosine-protein kinase receptor which, together with ddr-1, is involved in axon guidance to establish the tracts for the ventral and dorsal nerve cords during nervous system development. Acts upstream of the adapter shc-1, and the tyrosine kinase receptors svh-1 and svh-2 to regulate axon regeneration following injury in D-type motor neurons. May mediate axon regeneration in association with the collagen emb-9. The polypeptide is Discoidin domain-containing receptor tyrosine kinase B (Caenorhabditis elegans).